We begin with the raw amino-acid sequence, 615 residues long: RUN domain-containing protein 1 (615 aa).

The tract at residues 15 to 41 (TAVGPKAKDEEEEEEEEESLPPCETVR) is disordered. The segment covering 24–33 (EEEEEEEEES) has biased composition (acidic residues). Serine 73 is modified (phosphoserine). 2 coiled-coil regions span residues 76 to 102 (DATVRTLRRLEAERRQLDSALLALSSH) and 163 to 238 (RVRG…NLNE). The segment at 147–180 (DPCGGDESDVLPGDRPRVRGEDQSEQEKRERLET) is disordered. Basic and acidic residues predominate over residues 158-180 (PGDRPRVRGEDQSEQEKRERLET). Residues 423 to 604 (ELTTVVRKEL…LKFSLPVDLA (182 aa)) enclose the RUN domain. Serine 499 carries the post-translational modification Phosphoserine.

In terms of biological role, may play a role as p53/TP53 inhibitor and thus may have oncogenic activity. The chain is RUN domain-containing protein 1 (Rundc1) from Mus musculus (Mouse).